The chain runs to 535 residues: MSTKYIFVTGGVVSSIGKGIVAASLGRLLKNRGLKVTIQKFDPYINIDPGTMSPYQHGEVFVTDDGAETDLDLGHYERFIDINLNKYSNVTTGKIYSEVLRKERRGEYLGATVQVIPHITDALKEKIKRAALTTDSDVIITEVGGTVGDIESLPFLEALRQMKADVGADNVMYIHTTLLPYLKAAGEMKTKPTQHSVKELRGLGIQPNMLVIRTEEPAGQGIKNKLAQFCDVAPEAVIESLDVEHLYQIPLNLQAQGMDQIVCDHLKLDAPAADMTEWSAMVDKVMNLKKQVKISLVGKYVELQDAYISVVEALKHSGYVNDVEVKINWVNANDVTAENVAELLSDADGIIVPGGFGQRGTEGKIQAIRYARENDVPMLGVCLGMQLTCIEFARHVLGLEGANSAELAPETKYPIIDIMRDQIDIEDMGGTLRLGLYPSKLKRGSKAAAAYHNQEVVQRRHRHRYEFNNAFREQFEAAGFVFSGVSPDNRLVEIVEIPENKFFVACQYHPELSSRPNRPEELYTAFVTAAVENSN.

Residues 1-268 (MSTKYIFVTG…DQIVCDHLKL (268 aa)) are amidoligase domain. Serine 14 is a binding site for CTP. UTP is bound at residue serine 14. Residue 15-20 (SIGKGI) participates in ATP binding. Tyrosine 55 lines the L-glutamine pocket. Aspartate 72 is a binding site for ATP. The Mg(2+) site is built by aspartate 72 and glutamate 142. CTP contacts are provided by residues 149–151 (DIE), 189–194 (KTKPTQ), and lysine 225. UTP is bound by residues 189–194 (KTKPTQ) and lysine 225. The Glutamine amidotransferase type-1 domain maps to 293–535 (KISLVGKYVE…FVTAAVENSN (243 aa)). Glycine 355 is an L-glutamine binding site. The Nucleophile; for glutamine hydrolysis role is filled by cysteine 382. Residues 383 to 386 (LGMQ), glutamate 406, and arginine 464 each bind L-glutamine. Residues histidine 509 and glutamate 511 contribute to the active site.

This sequence belongs to the CTP synthase family. Homotetramer.

It carries out the reaction UTP + L-glutamine + ATP + H2O = CTP + L-glutamate + ADP + phosphate + 2 H(+). The catalysed reaction is L-glutamine + H2O = L-glutamate + NH4(+). It catalyses the reaction UTP + NH4(+) + ATP = CTP + ADP + phosphate + 2 H(+). Its pathway is pyrimidine metabolism; CTP biosynthesis via de novo pathway; CTP from UDP: step 2/2. With respect to regulation, allosterically activated by GTP, when glutamine is the substrate; GTP has no effect on the reaction when ammonia is the substrate. The allosteric effector GTP functions by stabilizing the protein conformation that binds the tetrahedral intermediate(s) formed during glutamine hydrolysis. Inhibited by the product CTP, via allosteric rather than competitive inhibition. In terms of biological role, catalyzes the ATP-dependent amination of UTP to CTP with either L-glutamine or ammonia as the source of nitrogen. Regulates intracellular CTP levels through interactions with the four ribonucleotide triphosphates. This is CTP synthase from Streptococcus pneumoniae (strain ATCC BAA-255 / R6).